The primary structure comprises 75 residues: Large ribosomal subunit protein bL31 (75 aa).

It belongs to the bacterial ribosomal protein bL31 family. Type A subfamily. Part of the 50S ribosomal subunit.

Functionally, binds the 23S rRNA. The chain is Large ribosomal subunit protein bL31 from Zymomonas mobilis subsp. mobilis (strain ATCC 31821 / ZM4 / CP4).